The following is a 113-amino-acid chain: uncharacterized protein (113 aa).

Residues 1–19 form the signal peptide; sequence MLSPLSPRIIAAFTTAVGA.

This sequence to M.tuberculosis Rv1291c.

This is an uncharacterized protein from Mycobacterium tuberculosis (strain CDC 1551 / Oshkosh).